Reading from the N-terminus, the 119-residue chain is Immunoglobulin heavy variable 3-49 (119 aa).

The signal sequence occupies residues 1–19; that stretch reads MEFGLSWVFLVAILKGVQC. Positions 20–44 are framework-1; the sequence is EVQLVESGGGLVQPGRSLRLSCTAS. The Ig-like domain maps to 20 to 119; it reads EVQLVESGGG…EDTAVYYCTR (100 aa). A disulfide bridge links C41 with C117. Residues 45–52 form a complementarity-determining-1 region; the sequence is GFTFGDYA. Residues 53–69 form a framework-2 region; that stretch reads MSWVRQAPGKGLEWVGF. Residues 70 to 79 are complementarity-determining-2; it reads IRSKAYGGTT. Residues 80–117 form a framework-3 region; that stretch reads EYAASVKGRFTISRDDSKSIAYLQMNSLKTEDTAVYYC. Residues 118 to 119 form a complementarity-determining-3 region; sequence TR.

Immunoglobulins are composed of two identical heavy chains and two identical light chains; disulfide-linked.

It localises to the secreted. Its subcellular location is the cell membrane. Its function is as follows. V region of the variable domain of immunoglobulin heavy chains that participates in the antigen recognition. Immunoglobulins, also known as antibodies, are membrane-bound or secreted glycoproteins produced by B lymphocytes. In the recognition phase of humoral immunity, the membrane-bound immunoglobulins serve as receptors which, upon binding of a specific antigen, trigger the clonal expansion and differentiation of B lymphocytes into immunoglobulins-secreting plasma cells. Secreted immunoglobulins mediate the effector phase of humoral immunity, which results in the elimination of bound antigens. The antigen binding site is formed by the variable domain of one heavy chain, together with that of its associated light chain. Thus, each immunoglobulin has two antigen binding sites with remarkable affinity for a particular antigen. The variable domains are assembled by a process called V-(D)-J rearrangement and can then be subjected to somatic hypermutations which, after exposure to antigen and selection, allow affinity maturation for a particular antigen. This chain is Immunoglobulin heavy variable 3-49, found in Homo sapiens (Human).